A 123-amino-acid chain; its full sequence is Large ribosomal subunit protein uL14 (123 aa).

The protein belongs to the universal ribosomal protein uL14 family. Part of the 50S ribosomal subunit. Forms a cluster with proteins L3 and L19. In the 70S ribosome, L14 and L19 interact and together make contacts with the 16S rRNA in bridges B5 and B8.

Functionally, binds to 23S rRNA. Forms part of two intersubunit bridges in the 70S ribosome. This Aliivibrio fischeri (strain ATCC 700601 / ES114) (Vibrio fischeri) protein is Large ribosomal subunit protein uL14.